The sequence spans 242 residues: Ribosomal RNA small subunit methyltransferase G (242 aa).

S-adenosyl-L-methionine contacts are provided by residues Gly-78, Phe-83, 129–130 (AE), and Arg-148.

The protein belongs to the methyltransferase superfamily. RNA methyltransferase RsmG family.

The protein resides in the cytoplasm. In terms of biological role, specifically methylates the N7 position of a guanine in 16S rRNA. This Lachnoclostridium phytofermentans (strain ATCC 700394 / DSM 18823 / ISDg) (Clostridium phytofermentans) protein is Ribosomal RNA small subunit methyltransferase G.